Reading from the N-terminus, the 452-residue chain is MASKAPRPPEAIAAIATAPGRGGIGVVRVSGAGLTGFAQQLCGREPQPRLATLARFRDADGATIDEGILLYFPAPASFTGEDVLELQGHGGPVVMQMLLARCLALGARLAEPGEFTRRAFLNGKLDLAQAEAVADLIEASTAAAARSALRSLSGQFSEEVLRIRDALIDLRMLVEATIDFPEEEVEFLDKGRALPRLAAIRTQLDALLDRARQGALLRTGMNVVLVGRPNVGKSSLLNQLAGEDRAIVTDVAGTTRDALREAIQIEGIPLHVIDTAGLRQTSDVVERIGIERTWREVERADVVLRVIDSEGAEEDALEAELAARCPSAAARITVVNKIDLLGLAPERTETAGAVRLRLSARSGDGVDLLRTELLRAAGWHAHGEDVVLARERHLLALREALDHLAAAEAAASALELFAEELRLAQEALAGITGEFSADDLLGEIFSRFCIGK.

Positions 28, 85, and 124 each coordinate (6S)-5-formyl-5,6,7,8-tetrahydrofolate. The TrmE-type G domain occupies 220–378 (GMNVVLVGRP…LRTELLRAAG (159 aa)). Position 230 (asparagine 230) interacts with K(+). GTP contacts are provided by residues 230–235 (NVGKSS), 249–255 (TDVAGTT), 274–277 (DTAG), and 359–361 (SAR). Serine 234 contacts Mg(2+). K(+) is bound by residues threonine 249, valine 251, and threonine 254. Threonine 255 contacts Mg(2+). Lysine 452 contacts (6S)-5-formyl-5,6,7,8-tetrahydrofolate.

It belongs to the TRAFAC class TrmE-Era-EngA-EngB-Septin-like GTPase superfamily. TrmE GTPase family. Homodimer. Heterotetramer of two MnmE and two MnmG subunits. The cofactor is K(+).

The protein resides in the cytoplasm. Functionally, exhibits a very high intrinsic GTPase hydrolysis rate. Involved in the addition of a carboxymethylaminomethyl (cmnm) group at the wobble position (U34) of certain tRNAs, forming tRNA-cmnm(5)s(2)U34. The protein is tRNA modification GTPase MnmE of Azoarcus sp. (strain BH72).